The chain runs to 167 residues: NAD(P)H-quinone oxidoreductase subunit I, chloroplastic (167 aa).

4Fe-4S ferredoxin-type domains lie at G55 to K84 and L95 to E124. [4Fe-4S] cluster-binding residues include C64, C67, C70, C74, C104, C107, C110, and C114.

Belongs to the complex I 23 kDa subunit family. NDH is composed of at least 16 different subunits, 5 of which are encoded in the nucleus. It depends on [4Fe-4S] cluster as a cofactor.

The protein resides in the plastid. The protein localises to the chloroplast thylakoid membrane. The catalysed reaction is a plastoquinone + NADH + (n+1) H(+)(in) = a plastoquinol + NAD(+) + n H(+)(out). It carries out the reaction a plastoquinone + NADPH + (n+1) H(+)(in) = a plastoquinol + NADP(+) + n H(+)(out). Functionally, NDH shuttles electrons from NAD(P)H:plastoquinone, via FMN and iron-sulfur (Fe-S) centers, to quinones in the photosynthetic chain and possibly in a chloroplast respiratory chain. The immediate electron acceptor for the enzyme in this species is believed to be plastoquinone. Couples the redox reaction to proton translocation, and thus conserves the redox energy in a proton gradient. This chain is NAD(P)H-quinone oxidoreductase subunit I, chloroplastic, found in Aethionema grandiflorum (Persian stone-cress).